Consider the following 361-residue polypeptide: MAPSGSRSFDCWRVLYWIPVLFISLIVAWSYYAYVVQLCIETIENMGEKTVYLLIYHLLFLMFVWSYWQTIYSKPMNPLKEFHLSHVDKELLEREDRRESQQEILRRIAKDLPIYTRTMSGAIRYCDRCLLLKPDRCHHCSACDMCILKMDHHCPWVNNCVGFANYKFFMLFLAYSLLYCLFVTATDMQYFIQFWTNGLPDTQAKFHIMFLFFAASTFSVSLAFLFAYHCWLVCKNRSTLEAFRAPAFQHGTDKNGFSLGAYKNFRQVFGDEKKYWLLPIFSSLGDGCSFPTCLVNPDPEQPSIPPGRNPSVKSAGESHPFPPKPLRESQSRLLNNGQTDGSEDRDKRGTSNPALTIEKET.

The Cytoplasmic portion of the chain corresponds to 1 to 15 (MAPSGSRSFDCWRVL). A helical membrane pass occupies residues 16–36 (YWIPVLFISLIVAWSYYAYVV). Over 37 to 50 (QLCIETIENMGEKT) the chain is Lumenal. Residues 51–71 (VYLLIYHLLFLMFVWSYWQTI) form a helical membrane-spanning segment. Residues 72–167 (YSKPMNPLKE…NNCVGFANYK (96 aa)) lie on the Cytoplasmic side of the membrane. The DHHC domain occupies 124–174 (RYCDRCLLLKPDRCHHCSACDMCILKMDHHCPWVNNCVGFANYKFFMLFLA). Cysteine 154 functions as the S-palmitoyl cysteine intermediate in the catalytic mechanism. A helical transmembrane segment spans residues 168-188 (FFMLFLAYSLLYCLFVTATDM). The Lumenal portion of the chain corresponds to 189–207 (QYFIQFWTNGLPDTQAKFH). The helical transmembrane segment at 208 to 228 (IMFLFFAASTFSVSLAFLFAY) threads the bilayer. The Cytoplasmic segment spans residues 229 to 361 (HCWLVCKNRS…NPALTIEKET (133 aa)). The mediates localization to plasma membrane and recycling endosomes stretch occupies residues 296–361 (NPDPEQPSIP…NPALTIEKET (66 aa)). The segment covering 299 to 308 (PEQPSIPPGR) has biased composition (pro residues). The interval 299–361 (PEQPSIPPGR…NPALTIEKET (63 aa)) is disordered. The segment covering 331–340 (SRLLNNGQTD) has biased composition (polar residues). The Non-canonical dileucine endocytic signal motif lies at 333–334 (LL). The NPxY-like endocytic signal motif lies at 352–355 (NPAL).

This sequence belongs to the DHHC palmitoyltransferase family. In terms of assembly, monomer. Homodimer. The monomeric form has a higher catalytic activity. In terms of processing, autopalmitoylated.

The protein localises to the endoplasmic reticulum membrane. The protein resides in the golgi apparatus membrane. Its subcellular location is the postsynaptic density. It is found in the postsynaptic recycling endosome membrane. It localises to the cell membrane. The catalysed reaction is L-cysteinyl-[protein] + hexadecanoyl-CoA = S-hexadecanoyl-L-cysteinyl-[protein] + CoA. It carries out the reaction L-cysteinyl-[protein] + tetradecanoyl-CoA = S-tetradecanoyl-L-cysteinyl-[protein] + CoA. The enzyme catalyses L-cysteinyl-[protein] + octadecanoyl-CoA = S-octadecanoyl-L-cysteinyl-[protein] + CoA. In terms of biological role, palmitoyltransferase that catalyzes the addition of palmitate onto various protein substrates and is involved in a variety of cellular processes. Has no stringent fatty acid selectivity and in addition to palmitate can also transfer onto target proteins myristate from tetradecanoyl-CoA and stearate from octadecanoyl-CoA. The chain is Palmitoyltransferase ZDHHC2 from Danio rerio (Zebrafish).